The primary structure comprises 333 residues: Holliday junction branch migration complex subunit RuvB (333 aa).

A large ATPase domain (RuvB-L) region spans residues 1-182 (MDERLLSGES…FGVLSRLEYY (182 aa)). ATP-binding positions include L21, R22, G63, K66, T67, T68, 129–131 (EDF), R172, Y182, and R219. T67 contributes to the Mg(2+) binding site. The segment at 183-253 (TVDQLSAIVE…ITQMALELLQ (71 aa)) is small ATPAse domain (RuvB-S). Residues 256–333 (KLGLDHIDHK…EHFGMEIPKV (78 aa)) form a head domain (RuvB-H) region. DNA-binding residues include R311 and R316.

This sequence belongs to the RuvB family. As to quaternary structure, homohexamer. Forms an RuvA(8)-RuvB(12)-Holliday junction (HJ) complex. HJ DNA is sandwiched between 2 RuvA tetramers; dsDNA enters through RuvA and exits via RuvB. An RuvB hexamer assembles on each DNA strand where it exits the tetramer. Each RuvB hexamer is contacted by two RuvA subunits (via domain III) on 2 adjacent RuvB subunits; this complex drives branch migration. In the full resolvosome a probable DNA-RuvA(4)-RuvB(12)-RuvC(2) complex forms which resolves the HJ.

It localises to the cytoplasm. The catalysed reaction is ATP + H2O = ADP + phosphate + H(+). In terms of biological role, the RuvA-RuvB-RuvC complex processes Holliday junction (HJ) DNA during genetic recombination and DNA repair, while the RuvA-RuvB complex plays an important role in the rescue of blocked DNA replication forks via replication fork reversal (RFR). RuvA specifically binds to HJ cruciform DNA, conferring on it an open structure. The RuvB hexamer acts as an ATP-dependent pump, pulling dsDNA into and through the RuvAB complex. RuvB forms 2 homohexamers on either side of HJ DNA bound by 1 or 2 RuvA tetramers; 4 subunits per hexamer contact DNA at a time. Coordinated motions by a converter formed by DNA-disengaged RuvB subunits stimulates ATP hydrolysis and nucleotide exchange. Immobilization of the converter enables RuvB to convert the ATP-contained energy into a lever motion, pulling 2 nucleotides of DNA out of the RuvA tetramer per ATP hydrolyzed, thus driving DNA branch migration. The RuvB motors rotate together with the DNA substrate, which together with the progressing nucleotide cycle form the mechanistic basis for DNA recombination by continuous HJ branch migration. Branch migration allows RuvC to scan DNA until it finds its consensus sequence, where it cleaves and resolves cruciform DNA. The protein is Holliday junction branch migration complex subunit RuvB of Bacillus cereus (strain B4264).